We begin with the raw amino-acid sequence, 394 residues long: Elongation factor Tu 2 (394 aa).

A tr-type G domain is found at 10–204 (KPHVNVGTIG…ALDSYIPEPE (195 aa)). Residues 19-26 (GHVDHGKT) are G1. 19-26 (GHVDHGKT) is a binding site for GTP. T26 provides a ligand contact to Mg(2+). The G2 stretch occupies residues 60 to 64 (GITIN). The segment at 81–84 (DCPG) is G3. Residues 81–85 (DCPGH) and 136–139 (NKCD) contribute to the GTP site. The G4 stretch occupies residues 136 to 139 (NKCD). Residues 174–176 (SAL) are G5.

It belongs to the TRAFAC class translation factor GTPase superfamily. Classic translation factor GTPase family. EF-Tu/EF-1A subfamily. Monomer.

It is found in the cytoplasm. The catalysed reaction is GTP + H2O = GDP + phosphate + H(+). Its function is as follows. GTP hydrolase that promotes the GTP-dependent binding of aminoacyl-tRNA to the A-site of ribosomes during protein biosynthesis. The protein is Elongation factor Tu 2 of Shewanella sp. (strain MR-4).